A 127-amino-acid polypeptide reads, in one-letter code: Large ribosomal subunit protein bL12 (127 aa).

The protein belongs to the bacterial ribosomal protein bL12 family. As to quaternary structure, homodimer. Part of the ribosomal stalk of the 50S ribosomal subunit. Forms a multimeric L10(L12)X complex, where L10 forms an elongated spine to which 2 to 4 L12 dimers bind in a sequential fashion. Binds GTP-bound translation factors.

In terms of biological role, forms part of the ribosomal stalk which helps the ribosome interact with GTP-bound translation factors. Is thus essential for accurate translation. The polypeptide is Large ribosomal subunit protein bL12 (Syntrophotalea carbinolica (strain DSM 2380 / NBRC 103641 / GraBd1) (Pelobacter carbinolicus)).